A 91-amino-acid polypeptide reads, in one-letter code: N(2)-fixation sustaining protein CowN (91 aa).

This sequence belongs to the CowN family.

Functionally, is required to sustain N(2)-dependent growth in the presence of low levels of carbon monoxide (CO). Probably acts by protecting the N(2) fixation ability of the nitrogenase complex, which is inactivated in the presence of CO. This chain is N(2)-fixation sustaining protein CowN, found in Gluconacetobacter diazotrophicus (strain ATCC 49037 / DSM 5601 / CCUG 37298 / CIP 103539 / LMG 7603 / PAl5).